A 154-amino-acid polypeptide reads, in one-letter code: 3-hydroxyacyl-[acyl-carrier-protein] dehydratase FabZ (154 aa).

His-59 is an active-site residue.

The protein belongs to the thioester dehydratase family. FabZ subfamily.

It localises to the cytoplasm. The enzyme catalyses a (3R)-hydroxyacyl-[ACP] = a (2E)-enoyl-[ACP] + H2O. Involved in unsaturated fatty acids biosynthesis. Catalyzes the dehydration of short chain beta-hydroxyacyl-ACPs and long chain saturated and unsaturated beta-hydroxyacyl-ACPs. The polypeptide is 3-hydroxyacyl-[acyl-carrier-protein] dehydratase FabZ (Bartonella bacilliformis (strain ATCC 35685 / KC583 / Herrer 020/F12,63)).